Here is a 136-residue protein sequence, read N- to C-terminus: Small ribosomal subunit protein uS11 (136 aa).

It belongs to the universal ribosomal protein uS11 family. Part of the 30S ribosomal subunit. Interacts with proteins S7 and S18. Binds to IF-3.

Functionally, located on the platform of the 30S subunit, it bridges several disparate RNA helices of the 16S rRNA. Forms part of the Shine-Dalgarno cleft in the 70S ribosome. The chain is Small ribosomal subunit protein uS11 from Leptospira borgpetersenii serovar Hardjo-bovis (strain JB197).